A 406-amino-acid polypeptide reads, in one-letter code: MRSSATKGAKLKNSPRERLSSFNPQYAERYKELYRTLFWLLLISVLANTAPITILPGCPNRFYRLVHLSWMILWYGLFVLGSYWEFVLVTTQRVSLDRYLNAIESAIYVVHIFSIMLLTWQCRNWAPKLMTNIVTSDLNRAYTIDCNRTKRFIRLQLFLVGIFACLAIFFNIWTHKFVVYRSILSINSYVMPNIISSISFAQYYLLLQGIAWRQRRLTEGLERELTHLHSPRISEVQKIRMHHANLIDFTKAVNRTFQYSILLLFVGCFLNFNLVLFLVYQGIENPSMADFTKWVCMLLWLAMHVGKVCSILHFNQSIQNEHSTCLTLLSRVSYARKDIQDTITHFIIQMRTNVRQHVVCGVINLDLKFLTTLLVASADFFIFLLQYDVTYEALSKSVQGNVTRYK.

Residues 1–36 (MRSSATKGAKLKNSPRERLSSFNPQYAERYKELYRT) are Cytoplasmic-facing. The chain crosses the membrane as a helical span at residues 37-57 (LFWLLLISVLANTAPITILPG). Residues 58 to 69 (CPNRFYRLVHLS) lie on the Extracellular side of the membrane. Residues 70-90 (WMILWYGLFVLGSYWEFVLVT) form a helical membrane-spanning segment. The Cytoplasmic portion of the chain corresponds to 91–99 (TQRVSLDRY). A helical transmembrane segment spans residues 100-120 (LNAIESAIYVVHIFSIMLLTW). Residues 121 to 154 (QCRNWAPKLMTNIVTSDLNRAYTIDCNRTKRFIR) are Extracellular-facing. Asn-147 carries N-linked (GlcNAc...) asparagine glycosylation. The helical transmembrane segment at 155–175 (LQLFLVGIFACLAIFFNIWTH) threads the bilayer. Residues 176–189 (KFVVYRSILSINSY) lie on the Cytoplasmic side of the membrane. The chain crosses the membrane as a helical span at residues 190–210 (VMPNIISSISFAQYYLLLQGI). The Extracellular portion of the chain corresponds to 211–259 (AWRQRRLTEGLERELTHLHSPRISEVQKIRMHHANLIDFTKAVNRTFQY). The N-linked (GlcNAc...) asparagine glycan is linked to Asn-254. Residues 260–280 (SILLLFVGCFLNFNLVLFLVY) traverse the membrane as a helical segment. The Cytoplasmic portion of the chain corresponds to 281–364 (QGIENPSMAD…RQHVVCGVIN (84 aa)). Residues 365-385 (LDLKFLTTLLVASADFFIFLL) form a helical membrane-spanning segment. Topologically, residues 386 to 406 (QYDVTYEALSKSVQGNVTRYK) are extracellular. N-linked (GlcNAc...) asparagine glycosylation is present at Asn-401.

This sequence belongs to the insect chemoreceptor superfamily. Gustatory receptor (GR) family. Gr10a subfamily. As to expression, expressed in the adult abdomen and wing. In larvae, is expressed in neurons of the terminal external chemosensory organ.

The protein localises to the cell membrane. In terms of biological role, probable gustatory receptor which mediates acceptance or avoidance behavior, depending on its substrates. The chain is Putative gustatory receptor 59f (Gr59f) from Drosophila melanogaster (Fruit fly).